The following is a 315-amino-acid chain: Ribosomal large subunit pseudouridine synthase C (315 aa).

The region spanning 20-93 (QRIDNFLRNQ…TKLNKVAELQ (74 aa)) is the S4 RNA-binding domain. Residue aspartate 145 is part of the active site.

This sequence belongs to the pseudouridine synthase RluA family.

The enzyme catalyses uridine(955/2504/2580) in 23S rRNA = pseudouridine(955/2504/2580) in 23S rRNA. In terms of biological role, responsible for synthesis of pseudouridine from uracil at positions 955, 2504 and 2580 in 23S ribosomal RNA. The sequence is that of Ribosomal large subunit pseudouridine synthase C (rluC) from Vibrio vulnificus (strain CMCP6).